A 255-amino-acid chain; its full sequence is MPEIRTFLCRSDNIGVLIRDPATGACAAIDVPEAGAVLRVLGETGWSLTDILVTHRHFDHVEGTPEVKARTGARVTAPAKAGDAVPEVDATVREGDAVRLGSLVAAVWETPGHCADHVTYWFERERIAFAGDTLFTLGCGRVMESPPEVLWRSLSRFLALPDETAIYSGHDYVLSNARFALAADPDNPNLKARAELAERVKRDGRFLIPTTLGEEKATNPFLRATEPALARAVGMAPGSDPAAVFTALREWKNRF.

Positions 55, 57, 59, 60, 113, 132, and 170 each coordinate Zn(2+).

It belongs to the metallo-beta-lactamase superfamily. Glyoxalase II family. As to quaternary structure, monomer. The cofactor is Zn(2+).

The catalysed reaction is an S-(2-hydroxyacyl)glutathione + H2O = a 2-hydroxy carboxylate + glutathione + H(+). It participates in secondary metabolite metabolism; methylglyoxal degradation; (R)-lactate from methylglyoxal: step 2/2. Its function is as follows. Thiolesterase that catalyzes the hydrolysis of S-D-lactoyl-glutathione to form glutathione and D-lactic acid. The sequence is that of Hydroxyacylglutathione hydrolase from Methylobacterium sp. (strain 4-46).